Here is a 296-residue protein sequence, read N- to C-terminus: Tubulin polyglutamylase complex subunit 2 (296 aa).

The tract at residues 257–296 (KILIPKKKGPVQPVSGQKGPGPLAPPTSKPSAGCGNPVRK) is disordered.

In terms of assembly, part of the neuronal tubulin polyglutamylase complex which contains TPGS1, TPGS2, TTLL1, LRRC49 and NICN1. Interacts with CSTPP1 and LRRC49.

It localises to the cytoplasm. The protein resides in the cytoskeleton. Its subcellular location is the microtubule organizing center. It is found in the centrosome. The protein localises to the centriolar satellite. Functionally, subunit of the tubulin polyglutamylase complex (TPGC). The complex mediates cilia and flagella polyglutamylation which is essential for their biogenesis and motility. This chain is Tubulin polyglutamylase complex subunit 2 (Tpgs2), found in Rattus norvegicus (Rat).